Reading from the N-terminus, the 409-residue chain is Bone morphogenetic protein 4 (409 aa).

Positions 1–19 (MIPGNRMLMVVLLCQVLLG) are cleaved as a signal peptide. The propeptide occupies 20–293 (GASHASLIPE…ALTRRRRAKR (274 aa)). Phosphoserine is present on serine 91. N-linked (GlcNAc...) asparagine glycosylation is found at asparagine 144 and asparagine 209. The disordered stretch occupies residues 284–308 (ALTRRRRAKRSPKHHPQRARKKNKN). 3 disulfide bridges follow: cysteine 309/cysteine 374, cysteine 338/cysteine 406, and cysteine 342/cysteine 408. N-linked (GlcNAc...) asparagine glycans are attached at residues asparagine 351 and asparagine 366.

The protein belongs to the TGF-beta family. As to quaternary structure, homodimer; disulfide-linked. Interacts with GREM2. Part of a complex consisting of TWSG1 and CHRD. Interacts with the serine proteases, HTRA1 and HTRA3; the interaction with either inhibits BMP4-mediated signaling. The HTRA protease activity is required for this inhibition. Interacts with SOSTDC1. Interacts with FBN1 (via N-terminal domain) and FBN2. Interacts with type I receptor BMPR1A. Interacts with type II receptor BMPR2. Interacts with FSTL1; this interaction inhibits the activation of the BMP4/Smad1/5/8 signaling pathway. Interacts with TGFBR3.

Its subcellular location is the secreted. It localises to the extracellular space. The protein localises to the extracellular matrix. Functionally, growth factor of the TGF-beta superfamily that plays essential roles in many developmental processes, including neurogenesis, vascular development, angiogenesis and osteogenesis. Acts in concert with PTHLH/PTHRP to stimulate ductal outgrowth during embryonic mammary development and to inhibit hair follicle induction. Initiates the canonical BMP signaling cascade by associating with type I receptor BMPR1A and type II receptor BMPR2. Once all three components are bound together in a complex at the cell surface, BMPR2 phosphorylates and activates BMPR1A. In turn, BMPR1A propagates signal by phosphorylating SMAD1/5/8 that travel to the nucleus and act as activators and repressors of transcription of target genes. Positively regulates the expression of odontogenic development regulator MSX1 via inducing the IPO7-mediated import of SMAD1 to the nucleus. Required for MSX1-mediated mesenchymal molar tooth bud development beyond the bud stage, via promoting Wnt signaling. Acts as a positive regulator of odontoblast differentiation during mesenchymal tooth germ formation, expression is repressed during the bell stage by MSX1-mediated inhibition of CTNNB1 signaling. Able to induce its own expression in dental mesenchymal cells and also in the neighboring dental epithelial cells via an MSX1-mediated pathway. Can also signal through non-canonical BMP pathways such as ERK/MAP kinase, PI3K/Akt, or SRC cascades. For example, induces SRC phosphorylation which, in turn, activates VEGFR2, leading to an angiogenic response. The sequence is that of Bone morphogenetic protein 4 from Suncus murinus (Asian house shrew).